A 525-amino-acid chain; its full sequence is Ankyrin repeat and SOCS box protein 3 (525 aa).

ANK repeat units lie at residues 9-38 (DTCSTVGLAAREGNVKVLRKLLKKGRSIDV), 42-71 (RGWMPIHEASYHNSVECLRMLIRADSSENY), 78-107 (EGFCALHLAASQGHWKIIQILLEAGADPNA), 111-140 (EETTPLFLAVENGQIDVLRLLLRYGANVNG), 145-174 (CGWNALHQASFQGNAEIIKLLLKKGANKEC), 178-207 (FGITPLFVAAQYGKLESLSILISSGADVNC), 211-240 (DKATPLFIAAQEGHTECVELLLSSGADPDL), 246-275 (NWQLPIHAAAQMGHTKILDLLIPLTNRVCD), 279-308 (NKVSPVYSAVLGGHEECLEMLLQSGYSPDA), 315-346 (GFSSPLCMAFQKDCDFFGIVNILLKYGAQLNE), and 348-373 (HLAYCLKYERFSVFRYFLKKCCPSTP). The SOCS box domain maps to 441–505 (MLSARASNSS…HDYLLYAEVL (65 aa)).

It belongs to the ankyrin SOCS box (ASB) family. Interacts with ELOB and TNFRSF1B.

It functions in the pathway protein modification; protein ubiquitination. Its function is as follows. Probable substrate-recognition component of a SCF-like ECS (Elongin-Cullin-SOCS-box protein) E3 ubiquitin-protein ligase complex which mediates the ubiquitination and subsequent proteasomal degradation of target proteins. Recognizes TNFRSF1B. This is Ankyrin repeat and SOCS box protein 3 (ASB3) from Bos taurus (Bovine).